A 155-amino-acid chain; its full sequence is Large ribosomal subunit protein bL17 (155 aa).

It belongs to the bacterial ribosomal protein bL17 family. In terms of assembly, part of the 50S ribosomal subunit. Contacts protein L32.

This Syntrophotalea carbinolica (strain DSM 2380 / NBRC 103641 / GraBd1) (Pelobacter carbinolicus) protein is Large ribosomal subunit protein bL17.